The primary structure comprises 278 residues: 3-oxoacyl-[acyl-carrier-protein] reductase (278 aa).

NADP(+) is bound by residues Thr-13, Arg-14, Ile-16, Ser-36, Ser-40, Thr-44, Asp-66, Phe-67, Glu-77, Gly-122, Gln-125, and Glu-126. The active-site Proton donor is the Ser-182. Residues Tyr-198, Lys-202, Leu-230, and Val-231 each coordinate NADP(+). Catalysis depends on Tyr-198, which acts as the Proton acceptor. Lys-202 (lowers pKa of active site Tyr) is an active-site residue.

Belongs to the short-chain dehydrogenases/reductases (SDR) family.

The protein localises to the mitochondrion. The enzyme catalyses a (3R)-hydroxyacyl-[ACP] + NADP(+) = a 3-oxoacyl-[ACP] + NADPH + H(+). It participates in lipid metabolism; fatty acid biosynthesis. Functionally, involved in biosynthesis of fatty acids in mitochondria. In Saccharomyces cerevisiae (strain ATCC 204508 / S288c) (Baker's yeast), this protein is 3-oxoacyl-[acyl-carrier-protein] reductase (OAR1).